Here is a 542-residue protein sequence, read N- to C-terminus: Amino-acid acetyltransferase, mitochondrial (542 aa).

The transit peptide at 1–14 directs the protein to the mitochondrion; that stretch reads MLFRRLLTTKVGYH. The N-acetyltransferase domain occupies 368–534; it reads AGSAQLPAHK…LREYITYVRD (167 aa).

The protein belongs to the acetyltransferase family.

The protein resides in the mitochondrion. The catalysed reaction is L-glutamate + acetyl-CoA = N-acetyl-L-glutamate + CoA + H(+). It participates in amino-acid biosynthesis; L-arginine biosynthesis; N(2)-acetyl-L-ornithine from L-glutamate: step 1/4. Its function is as follows. N-acetylglutamate synthase involved in arginine biosynthesis. The protein is Amino-acid acetyltransferase, mitochondrial (ARG2) of Eremothecium gossypii (strain ATCC 10895 / CBS 109.51 / FGSC 9923 / NRRL Y-1056) (Yeast).